We begin with the raw amino-acid sequence, 78 residues long: Large ribosomal subunit protein eL20 (78 aa).

This sequence belongs to the eukaryotic ribosomal protein eL20 family. As to quaternary structure, part of the 50S ribosomal subunit. Binds 23S rRNA.

The polypeptide is Large ribosomal subunit protein eL20 (Pyrobaculum islandicum (strain DSM 4184 / JCM 9189 / GEO3)).